The primary structure comprises 416 residues: Serine hydroxymethyltransferase (416 aa).

(6S)-5,6,7,8-tetrahydrofolate is bound by residues Leu-118 and 122-124; that span reads GHL. Lys-226 carries the post-translational modification N6-(pyridoxal phosphate)lysine. Residues Glu-242 and 350 to 352 each bind (6S)-5,6,7,8-tetrahydrofolate; that span reads SPF.

This sequence belongs to the SHMT family. Homodimer. Pyridoxal 5'-phosphate serves as cofactor.

The protein resides in the cytoplasm. It carries out the reaction (6R)-5,10-methylene-5,6,7,8-tetrahydrofolate + glycine + H2O = (6S)-5,6,7,8-tetrahydrofolate + L-serine. It functions in the pathway one-carbon metabolism; tetrahydrofolate interconversion. The protein operates within amino-acid biosynthesis; glycine biosynthesis; glycine from L-serine: step 1/1. Catalyzes the reversible interconversion of serine and glycine with tetrahydrofolate (THF) serving as the one-carbon carrier. This reaction serves as the major source of one-carbon groups required for the biosynthesis of purines, thymidylate, methionine, and other important biomolecules. Also exhibits THF-independent aldolase activity toward beta-hydroxyamino acids, producing glycine and aldehydes, via a retro-aldol mechanism. The chain is Serine hydroxymethyltransferase from Helicobacter pylori (strain Shi470).